Here is an 883-residue protein sequence, read N- to C-terminus: Serine/threonine-protein kinase greatwall (883 aa).

At Met1 the chain carries N-acetylmethionine. Positions 1–23 are disordered; the sequence is MEPTMGGEMESGGGAATGECVNR. Residues 35–839 form the Protein kinase domain; that stretch reads FTIVKPISRG…MKELKHHPLF (805 aa). ATP-binding positions include 41 to 49 and Lys62; that span reads ISRGAFGKV. The active-site Proton acceptor is the Asp156. Phosphothreonine occurs at positions 209 and 224. Ser295 is subject to Phosphoserine. Residues 298–317 are disordered; the sequence is RLATSSTSSPSHTFISSMES. Over residues 301-314 the composition is skewed to low complexity; that stretch reads TSSTSSPSHTFISS. Residues Ser373 and Ser456 each carry the phosphoserine modification. The segment at 511–530 is disordered; it reads ENVGSSFTDKHQTPEKSPVP. Thr523 is modified (phosphothreonine). 2 positions are modified to phosphoserine: Ser556 and Ser560. The segment at 569–597 is disordered; the sequence is IHMDSDSSFPGISIMESPLGGQSLDPDKN. Phosphoserine is present on residues Ser635, Ser661, and Ser672. The tract at residues 706-737 is disordered; sequence RSDMPYQQTPNQVKSETPYRTPKSVRRGAAPV. The span at 710 to 720 shows a compositional bias: polar residues; sequence PYQQTPNQVKS. A Phosphothreonine modification is found at Thr726. Ser729 carries the post-translational modification Phosphoserine. Thr745 is subject to Phosphothreonine; by CDK1. Residues 840-883 enclose the AGC-kinase C-terminal domain; sequence SGVDWENLQHQKMPFIPQPDDETDTSYFEARNNAQHLTVSGFSL. A phosphoserine mark is found at Ser879 and Ser882.

It belongs to the protein kinase superfamily. AGC Ser/Thr protein kinase family. Post-translationally, phosphorylation at Thr-745 by CDK1 during M phase activates its kinase activity. Maximum phosphorylation occurs in prometaphase.

The protein localises to the cytoplasm. The protein resides in the cytoskeleton. Its subcellular location is the microtubule organizing center. It is found in the centrosome. It localises to the nucleus. The enzyme catalyses L-seryl-[protein] + ATP = O-phospho-L-seryl-[protein] + ADP + H(+). It carries out the reaction L-threonyl-[protein] + ATP = O-phospho-L-threonyl-[protein] + ADP + H(+). Serine/threonine kinase that plays a key role in M phase by acting as a regulator of mitosis entry and maintenance. Acts by promoting the inactivation of protein phosphatase 2A (PP2A) during M phase: does not directly inhibit PP2A but acts by mediating phosphorylation and subsequent activation of ARPP19 and ENSA at 'Ser-62' and 'Ser-67', respectively. ARPP19 and ENSA are phosphatase inhibitors that specifically inhibit the PPP2R2D (PR55-delta) subunit of PP2A. Inactivation of PP2A during M phase is essential to keep cyclin-B1-CDK1 activity high. Following DNA damage, it is also involved in checkpoint recovery by being inhibited. The polypeptide is Serine/threonine-protein kinase greatwall (MASTL) (Bos taurus (Bovine)).